The sequence spans 476 residues: Eukaryotic translation initiation factor 3 subunit L (476 aa).

Residues Asp257 to Leu452 form the PCI domain.

The protein belongs to the eIF-3 subunit L family. As to quaternary structure, component of the eukaryotic translation initiation factor 3 (eIF-3) complex.

It is found in the cytoplasm. Component of the eukaryotic translation initiation factor 3 (eIF-3) complex, which is involved in protein synthesis of a specialized repertoire of mRNAs and, together with other initiation factors, stimulates binding of mRNA and methionyl-tRNAi to the 40S ribosome. The eIF-3 complex specifically targets and initiates translation of a subset of mRNAs involved in cell proliferation. This chain is Eukaryotic translation initiation factor 3 subunit L, found in Aspergillus clavatus (strain ATCC 1007 / CBS 513.65 / DSM 816 / NCTC 3887 / NRRL 1 / QM 1276 / 107).